Consider the following 373-residue polypeptide: MTQPIIRSIPLHVVSNDHPSSSPLQPGVKQSGEDKIGRSPVQFADVPVLRKPSWIRVRIPSGNAVQSLKAKLRENRLVTVCEEAACPNIHECFSHGTATFMILGEVCTRRCSFCDVAHGRPKPPDPEEPISLARTVAEMGLKYVVVTSVDRDDLRDGGAQHFVDCIAAIRQSAPQTRIEILTPDFRGKGRMDRALDILAACPPDVFNHNVETVPALYPNVRPGADYQWSLTLLKRFKAQHPQVPTKSGIMLGLGETLDQVQATLRDLRAHDVDMVTVGQYLQPTPHHHPVLRYWTPDEYKALEEYGMALGFSHVASGPMVRSSYHADHQAKEAGLGFNATVSLGSPAVSSTEHRERNTIASKSASKTESIHHR.

The segment at 14 to 36 is disordered; the sequence is VSNDHPSSSPLQPGVKQSGEDKI. Residues cysteine 81, cysteine 86, cysteine 92, cysteine 107, cysteine 111, cysteine 114, and serine 323 each coordinate [4Fe-4S] cluster. In terms of domain architecture, Radical SAM core spans 93–312; the sequence is FSHGTATFMI…EEYGMALGFS (220 aa). The tract at residues 346–373 is disordered; it reads PAVSSTEHRERNTIASKSASKTESIHHR. The span at 358–367 shows a compositional bias: polar residues; sequence TIASKSASKT.

The protein belongs to the radical SAM superfamily. Lipoyl synthase family. Requires [4Fe-4S] cluster as cofactor.

It localises to the cytoplasm. It catalyses the reaction [[Fe-S] cluster scaffold protein carrying a second [4Fe-4S](2+) cluster] + N(6)-octanoyl-L-lysyl-[protein] + 2 oxidized [2Fe-2S]-[ferredoxin] + 2 S-adenosyl-L-methionine + 4 H(+) = [[Fe-S] cluster scaffold protein] + N(6)-[(R)-dihydrolipoyl]-L-lysyl-[protein] + 4 Fe(3+) + 2 hydrogen sulfide + 2 5'-deoxyadenosine + 2 L-methionine + 2 reduced [2Fe-2S]-[ferredoxin]. It participates in protein modification; protein lipoylation via endogenous pathway; protein N(6)-(lipoyl)lysine from octanoyl-[acyl-carrier-protein]: step 2/2. Functionally, catalyzes the radical-mediated insertion of two sulfur atoms into the C-6 and C-8 positions of the octanoyl moiety bound to the lipoyl domains of lipoate-dependent enzymes, thereby converting the octanoylated domains into lipoylated derivatives. The chain is Lipoyl synthase from Xylella fastidiosa (strain M23).